A 743-amino-acid polypeptide reads, in one-letter code: Threonine synthase-like 1 (743 aa).

Lys-281 carries the post-translational modification N6-acetyllysine. Position 351 is an N6-(pyridoxal phosphate)lysine (Lys-351).

Belongs to the threonine synthase family. Pyridoxal 5'-phosphate is required as a cofactor.

This is Threonine synthase-like 1 (THNSL1) from Pongo abelii (Sumatran orangutan).